Reading from the N-terminus, the 401-residue chain is Insertion element ISM1 uncharacterized 48.3 kDa protein (401 aa).

This polypeptide is involved in transposition, and should therefore bind to nucleic acids. This is Insertion element ISM1 uncharacterized 48.3 kDa protein from Methanobrevibacter smithii.